The primary structure comprises 199 residues: Recombination protein RecR (199 aa).

The C4-type zinc finger occupies 56 to 71 (CQQCNNYTEQTLCALC). In terms of domain architecture, Toprim spans 79-174 (TLLCVVESPA…NISQLAHGIP (96 aa)).

Belongs to the RecR family.

May play a role in DNA repair. It seems to be involved in an RecBC-independent recombinational process of DNA repair. It may act with RecF and RecO. The sequence is that of Recombination protein RecR from Legionella pneumophila subsp. pneumophila (strain Philadelphia 1 / ATCC 33152 / DSM 7513).